The primary structure comprises 433 residues: Trigger factor (433 aa).

The region spanning 163 to 248 (GDTVNIDFSG…VNEIKFKEVP (86 aa)) is the PPIase FKBP-type domain.

This sequence belongs to the FKBP-type PPIase family. Tig subfamily.

The protein localises to the cytoplasm. It carries out the reaction [protein]-peptidylproline (omega=180) = [protein]-peptidylproline (omega=0). Its function is as follows. Involved in protein export. Acts as a chaperone by maintaining the newly synthesized protein in an open conformation. Functions as a peptidyl-prolyl cis-trans isomerase. The protein is Trigger factor of Staphylococcus aureus (strain bovine RF122 / ET3-1).